A 230-amino-acid chain; its full sequence is Large ribosomal subunit protein uL1 (230 aa).

This sequence belongs to the universal ribosomal protein uL1 family. In terms of assembly, part of the 50S ribosomal subunit.

In terms of biological role, binds directly to 23S rRNA. The L1 stalk is quite mobile in the ribosome, and is involved in E site tRNA release. Protein L1 is also a translational repressor protein, it controls the translation of the L11 operon by binding to its mRNA. The chain is Large ribosomal subunit protein uL1 from Leptospira biflexa serovar Patoc (strain Patoc 1 / Ames).